The chain runs to 353 residues: Probable cytochrome c oxidase subunit 2 (353 aa).

A signal peptide spans 1-42 (MTARELVCSQRVGQGLSRRLRPLVLAVTLGVLVVTLSGCSWS). The next 2 helical transmembrane spans lie at 63-83 (LWIG…GLIF) and 110-130 (LVLT…TVIV). Positions 246, 287, 291, and 295 each coordinate Cu cation.

Belongs to the cytochrome c oxidase subunit 2 family. It depends on Cu cation as a cofactor. Heme is required as a cofactor.

It localises to the cell membrane. It catalyses the reaction 4 Fe(II)-[cytochrome c] + O2 + 8 H(+)(in) = 4 Fe(III)-[cytochrome c] + 2 H2O + 4 H(+)(out). Its function is as follows. Subunits I and II form the functional core of the enzyme complex. Electrons originating in cytochrome c are transferred via heme a and Cu(A) to the binuclear center formed by heme a3 and Cu(B). The sequence is that of Probable cytochrome c oxidase subunit 2 (ctaC) from Mycobacterium leprae (strain TN).